Here is a 174-residue protein sequence, read N- to C-terminus: Acetolactate synthase small subunit (174 aa).

The ACT domain occupies 4-78; that stretch reads TLSVLVQDEA…NILNVQDVTN (75 aa).

Belongs to the acetolactate synthase small subunit family. In terms of assembly, dimer of large and small chains.

The protein localises to the plastid. The protein resides in the chloroplast. The catalysed reaction is 2 pyruvate + H(+) = (2S)-2-acetolactate + CO2. Its pathway is amino-acid biosynthesis; L-isoleucine biosynthesis; L-isoleucine from 2-oxobutanoate: step 1/4. It functions in the pathway amino-acid biosynthesis; L-valine biosynthesis; L-valine from pyruvate: step 1/4. This chain is Acetolactate synthase small subunit (ilvH), found in Porphyra purpurea (Red seaweed).